The primary structure comprises 221 residues: GTP cyclohydrolase 1 (221 aa).

Zn(2+) contacts are provided by cysteine 109, histidine 112, and cysteine 180.

This sequence belongs to the GTP cyclohydrolase I family. In terms of assembly, toroid-shaped homodecamer, composed of two pentamers of five dimers.

It carries out the reaction GTP + H2O = 7,8-dihydroneopterin 3'-triphosphate + formate + H(+). Its pathway is cofactor biosynthesis; 7,8-dihydroneopterin triphosphate biosynthesis; 7,8-dihydroneopterin triphosphate from GTP: step 1/1. In Serratia proteamaculans (strain 568), this protein is GTP cyclohydrolase 1.